A 369-amino-acid chain; its full sequence is Microtubule-associated protein 6 homolog (369 aa).

2 disordered regions span residues 41-213 and 251-369; these read LPAQ…AADA and AQYK…EAKE. Low complexity predominate over residues 70 to 80; sequence APGPARPGTAP. Mn stretches follow at residues 87-110 and 122-145; these read DSVM…KPKS and ETQY…WIPK. 3 stretches are compositionally biased toward basic and acidic residues: residues 89 to 110, 118 to 142, and 179 to 209; these read VMRH…KPKS, PFEK…DHPW, and EHPK…RGRA. The tract at residues 228 to 251 is mn 3; sequence SSSYRNEFRPWIDVKPVKAIKAKA. Positions 297–308 are enriched in basic and acidic residues; sequence PYKEPPKVEKPS. Residues 312-328 are compositionally biased toward basic residues; it reads SKPKKTTTSHKPLKKAK. Residues 350-369 are compositionally biased toward basic and acidic residues; sequence KPEDKEKSKEMNNKLAEAKE.

The protein belongs to the STOP family.

The protein resides in the cytoplasm. It localises to the cytoskeleton. Involved in microtubule stabilization in many cell types, including neuronal cells. Specifically has microtubule cold stabilizing activity. Involved in dendrite morphogenesis and maintenance by regulating lysosomal trafficking. This chain is Microtubule-associated protein 6 homolog (MAP6), found in Gallus gallus (Chicken).